The sequence spans 99 residues: Malonate decarboxylase acyl carrier protein (99 aa).

An O-(phosphoribosyl dephospho-coenzyme A)serine modification is found at serine 25.

Belongs to the MdcC family. Post-translationally, covalently binds the prosthetic group of malonate decarboxylase.

It localises to the cytoplasm. Functionally, subunit of malonate decarboxylase, it is an acyl carrier protein to which acetyl and malonyl thioester residues are bound via a 2'-(5''-phosphoribosyl)-3'-dephospho-CoA prosthetic group and turn over during the catalytic mechanism. This is Malonate decarboxylase acyl carrier protein from Pseudomonas fluorescens (strain ATCC BAA-477 / NRRL B-23932 / Pf-5).